Here is a 299-residue protein sequence, read N- to C-terminus: Phosphoribosylaminoimidazole-succinocarboxamide synthase (299 aa).

The segment at 259-279 is disordered; it reads PESGWDRKSEQPPPPLPQHVV.

Belongs to the SAICAR synthetase family.

The enzyme catalyses 5-amino-1-(5-phospho-D-ribosyl)imidazole-4-carboxylate + L-aspartate + ATP = (2S)-2-[5-amino-1-(5-phospho-beta-D-ribosyl)imidazole-4-carboxamido]succinate + ADP + phosphate + 2 H(+). Its pathway is purine metabolism; IMP biosynthesis via de novo pathway; 5-amino-1-(5-phospho-D-ribosyl)imidazole-4-carboxamide from 5-amino-1-(5-phospho-D-ribosyl)imidazole-4-carboxylate: step 1/2. The chain is Phosphoribosylaminoimidazole-succinocarboxamide synthase from Streptomyces avermitilis (strain ATCC 31267 / DSM 46492 / JCM 5070 / NBRC 14893 / NCIMB 12804 / NRRL 8165 / MA-4680).